The primary structure comprises 2223 residues: Voltage-dependent T-type calcium channel subunit alpha-1I (2223 aa).

The span at 1-19 (MAESASPPSSSAAAPAAEP) shows a compositional bias: low complexity. Residues 1 to 46 (MAESASPPSSSAAAPAAEPGVTTEQPGPRSPPSSPPGLEEPLDGAD) are disordered. Residues 1–78 (MAESASPPSS…RNWCIKMVCN (78 aa)) are Cytoplasmic-facing. The stretch at 66 to 401 (TSPRNWCIKM…LCLVVIATQF (336 aa)) is one I repeat. A helical membrane pass occupies residues 79–99 (PWFECVSMLVILLNCVTLGMY). Residues 100–120 (QPCDDMDCLSDRCKILQVFDD) are Extracellular-facing. Residues 121–141 (FIFIFFAMEMVLKMVALGIFG) traverse the membrane as a helical segment. Residues 142–148 (KKCYLGD) are Cytoplasmic-facing. Residues 149 to 168 (TWNRLDFFIVMAGMVEYSLD) form a helical membrane-spanning segment. At 169 to 173 (LQNIN) the chain is on the extracellular side. N-linked (GlcNAc...) asparagine glycosylation is present at N173. The helical transmembrane segment at 174 to 191 (LSAIRTVRVLRPLKAINR) threads the bilayer. The Cytoplasmic portion of the chain corresponds to 192 to 211 (VPSMRILVNLLLDTLPMLGN). Residues 212–232 (VLLLCFFVFFIFGIIGVQLWA) form a helical membrane-spanning segment. Over 233-377 (GLLRNRCFLE…DAHSFYNFIY (145 aa)) the chain is Extracellular. N-linked (GlcNAc...) asparagine glycosylation is found at N244 and N311. Residues 378–398 (FILLIIVGSFFMINLCLVVIA) form a helical membrane-spanning segment. Over 399 to 640 (TQFSETKQRE…AKLRGIVDSK (242 aa)) the chain is Cytoplasmic. 2 disordered regions span residues 467 to 536 (LGPE…ATPH) and 555 to 616 (CCQH…EQAD). An II repeat occupies 626–865 (WRETRAKLRG…LLVAILVEGF (240 aa)). Residues 641–661 (YFNRGIMMAILVNTVSMGIEH) form a helical membrane-spanning segment. Topologically, residues 662–676 (HEQPEELTNILEICN) are extracellular. The chain crosses the membrane as a helical span at residues 677 to 697 (VVFTSMFALEMILKLAAFGLF). The Cytoplasmic segment spans residues 698-702 (DYLRN). Residues 703–721 (PYNIFDSIIVIISIWEIVG) traverse the membrane as a helical segment. Residues 722-729 (QADGGLSV) are Extracellular-facing. A helical transmembrane segment spans residues 730–753 (LRTFRLLRVLKLVRFMPALRRQLV). Over 754 to 764 (VLMKTMDNVAT) the chain is Cytoplasmic. The chain crosses the membrane as a helical span at residues 765–785 (FCMLLMLFIFIFSILGMHIFG). Residues 786-841 (CKFSLRTDTGDTVPDRKNFDSLLWAIVTVFQILTQEDWNVVLYNGMASTSPWASLY) are Extracellular-facing. A helical membrane pass occupies residues 842–862 (FVALMTFGNYVLFNLLVAILV). Over 863 to 1166 (EGFQAEGDAN…NRFRVLCQTI (304 aa)) the chain is Cytoplasmic. The segment at 899–936 (GDPKLCPIPMTPNGHLDPSLPLGGHLGPAGAAGPAPRL) is disordered. A compositionally biased stretch (low complexity) spans 912–936 (GHLDPSLPLGGHLGPAGAAGPAPRL). Position 1058 is a phosphoserine (S1058). Residues 1157–1434 (NRFRVLCQTI…MFVGVVVENF (278 aa)) form an III repeat. Residues 1167-1187 (IAHKLFDYVVLAFIFLNCITI) traverse the membrane as a helical segment. At 1188–1209 (ALERPQIEAGSTERIFLTVSNY) the chain is on the extracellular side. A helical transmembrane segment spans residues 1210–1230 (IFTAIFVGEMTLKVVSLGLYF). Residues 1231–1244 (GEQAYLRSSWNVLD) are Cytoplasmic-facing. A helical transmembrane segment spans residues 1245–1265 (GFLVFVSIIDIVVSLASAGGA). The Extracellular segment spans residues 1266–1272 (KILGVLR). The chain crosses the membrane as a helical span at residues 1273 to 1294 (VLRLLRTLRPLRVISRAPGLKL). Residues 1295 to 1304 (VVETLISSLK) lie on the Cytoplasmic side of the membrane. Residues 1305-1325 (PIGNIVLICCAFFIIFGILGV) traverse the membrane as a helical segment. The Extracellular segment spans residues 1326–1410 (QLFKGKFYHC…TNHNPWMLLY (85 aa)). N-linked (GlcNAc...) asparagine glycans are attached at residues N1342 and N1345. A helical transmembrane segment spans residues 1411-1431 (FISFLLIVSFFVLNMFVGVVV). Residues 1432-1485 (ENFHKCRQHQEAEEARRREEKRLRRLEKKRRKAQRLPYYATYCHTRLLIHSMCT) are Cytoplasmic-facing. The IV repeat unit spans residues 1472–1733 (TYCHTRLLIH…VVVAVLMKHL (262 aa)). The chain crosses the membrane as a helical span at residues 1486–1506 (SHYLDIFITFIICLNVVTMSL). The Extracellular segment spans residues 1507-1522 (EHYNQPTSLETALKYC). The chain crosses the membrane as a helical span at residues 1523–1543 (NYMFTTVFVLEAVLKLVAFGL). The Cytoplasmic portion of the chain corresponds to 1544-1556 (RRFFKDRWNQLDL). A helical transmembrane segment spans residues 1557–1577 (AIVLLSVMGITLEEIEINAAL). The Extracellular portion of the chain corresponds to 1578 to 1583 (PINPTI). A helical membrane pass occupies residues 1584–1607 (IRIMRVLRIARVLKLLKMATGMRA). Residues 1608–1621 (LLDTVVQALPQVGN) are Cytoplasmic-facing. Residues 1622 to 1642 (LGLLFMLLFFIYAALGVELFG) traverse the membrane as a helical segment. Residues 1643-1709 (KLVCNDENPC…SSLQFVSPLY (67 aa)) are Extracellular-facing. Residues 1710-1730 (FVSFVLTAQFVLINVVVAVLM) form a helical membrane-spanning segment. Residues 1731-2223 (KHLDDSNKEA…PGDAASKRKR (493 aa)) are Cytoplasmic-facing. Disordered regions lie at residues 1758 to 1784 (LGPG…GGGD), 1868 to 1897 (LGDD…PEPM), 1937 to 1960 (LKHD…LLPM), 2013 to 2062 (SDTS…LSPA), and 2076 to 2223 (SLRG…KRKR). A compositionally biased stretch (gly residues) spans 1770–1784 (GAPGRGPGGAGGGGD). Low complexity predominate over residues 2013-2028 (SDTSLDASPSSSAGSL). Composition is skewed to polar residues over residues 2029–2040 (QTTLEDSLTLSD) and 2087–2096 (HSSGGSTSPG). Positions 2098 to 2111 (THHDSMDPSDEEGR) are enriched in basic and acidic residues. Positions 2126–2136 (TLSSLSLTSLF) are enriched in low complexity. The segment covering 2137–2146 (CPPPPPPAPG) has biased composition (pro residues). Low complexity predominate over residues 2160 to 2176 (AAPGRPHAAALAHGLAR).

This sequence belongs to the calcium channel alpha-1 subunit (TC 1.A.1.11) family. CACNA1I subfamily. Interacts with CATSPER1 and CATSPER2, leading to suppress T-type calcium channel activity. In terms of processing, in response to raising of intracellular calcium, the T-type channels are activated by CaM-kinase II. As to expression, brain specific.

Its subcellular location is the membrane. It catalyses the reaction Ca(2+)(in) = Ca(2+)(out). Functionally, voltage-sensitive calcium channels (VSCC) mediate the entry of calcium ions into excitable cells and are also involved in a variety of calcium-dependent processes, including muscle contraction, hormone or neurotransmitter release, gene expression, cell motility, cell division and cell death. This channel gives rise to T-type calcium currents. T-type calcium channels belong to the 'low-voltage activated (LVA)' group and are strongly blocked by nickel and mibefradil. A particularity of this type of channels is an opening at quite negative potentials, and a voltage-dependent inactivation. T-type channels serve pacemaking functions in both central neurons and cardiac nodal cells and support calcium signaling in secretory cells and vascular smooth muscle. They may also be involved in the modulation of firing patterns of neurons which is important for information processing as well as in cell growth processes. Gates in voltage ranges similar to, but higher than alpha 1G or alpha 1H. Its function is as follows. Voltage-sensitive calcium channels (VSCC) mediate the entry of calcium ions into excitable cells and are also involved in a variety of calcium-dependent processes, including muscle contraction, hormone or neurotransmitter release, gene expression, cell motility, cell division and cell death. This channel gives rise to T-type calcium currents. The chain is Voltage-dependent T-type calcium channel subunit alpha-1I (CACNA1I) from Homo sapiens (Human).